The following is a 266-amino-acid chain: Putative carbamate hydrolase RutD (266 aa).

One can recognise an AB hydrolase-1 domain in the interval 15–128 (AVLLSSGLGG…NAHSARCFDA (114 aa)).

It belongs to the AB hydrolase superfamily. Hydrolase RutD family.

It carries out the reaction carbamate + 2 H(+) = NH4(+) + CO2. Functionally, involved in pyrimidine catabolism. May facilitate the hydrolysis of carbamate, a reaction that can also occur spontaneously. The chain is Putative carbamate hydrolase RutD from Variovorax paradoxus (strain S110).